The following is a 230-amino-acid chain: Ribonuclease 3 (230 aa).

The 121-residue stretch at 5–125 (YSRFYNILGY…VIGAIYLDSD (121 aa)) folds into the RNase III domain. Mg(2+) is bound at residue Glu-40. The active site involves Asp-44. The Mg(2+) site is built by Asp-111 and Glu-114. Glu-114 is a catalytic residue. Positions 153-223 (DSKSKLQEIL…AEKMIEMLSQ (71 aa)) constitute a DRBM domain.

The protein belongs to the ribonuclease III family. Homodimer. Mg(2+) serves as cofactor.

It is found in the cytoplasm. The catalysed reaction is Endonucleolytic cleavage to 5'-phosphomonoester.. Functionally, digests double-stranded RNA. Involved in the processing of primary rRNA transcript to yield the immediate precursors to the large and small rRNAs (23S and 16S). Processes some mRNAs, and tRNAs when they are encoded in the rRNA operon. Processes pre-crRNA and tracrRNA of type II CRISPR loci if present in the organism. This Francisella tularensis subsp. holarctica (strain LVS) protein is Ribonuclease 3.